The sequence spans 386 residues: Methylthioribose-1-phosphate isomerase (386 aa).

The active-site Proton donor is the D255.

Belongs to the eIF-2B alpha/beta/delta subunits family. MtnA subfamily.

It localises to the cytoplasm. Its subcellular location is the nucleus. The enzyme catalyses 5-(methylsulfanyl)-alpha-D-ribose 1-phosphate = 5-(methylsulfanyl)-D-ribulose 1-phosphate. The protein operates within amino-acid biosynthesis; L-methionine biosynthesis via salvage pathway; L-methionine from S-methyl-5-thio-alpha-D-ribose 1-phosphate: step 1/6. Its function is as follows. Catalyzes the interconversion of methylthioribose-1-phosphate (MTR-1-P) into methylthioribulose-1-phosphate (MTRu-1-P). This chain is Methylthioribose-1-phosphate isomerase, found in Trypanosoma brucei brucei (strain 927/4 GUTat10.1).